Consider the following 95-residue polypeptide: Small ribosomal subunit protein bS6 (95 aa).

This sequence belongs to the bacterial ribosomal protein bS6 family.

In terms of biological role, binds together with bS18 to 16S ribosomal RNA. This is Small ribosomal subunit protein bS6 from Bacillus licheniformis (strain ATCC 14580 / DSM 13 / JCM 2505 / CCUG 7422 / NBRC 12200 / NCIMB 9375 / NCTC 10341 / NRRL NRS-1264 / Gibson 46).